We begin with the raw amino-acid sequence, 303 residues long: MLARRRFLQFSGAAVASSLALPLLARAAGKTAASAPTDAALTAATDFAALEKAVRGRFGVTLLDTASGRRIGHRQDERFPMCSTFKSVLAATVLSQAERQPALLDTRVPVRDADLLSHAPVTRRHAGKDMTVRDLCRATIITSDNTAANLLFGVVGGPPAVTAFLRSIGDAVSRTDRLEPELNSFAKGDPRDTTTPAAMAATLQRVVLGEVLQLASRQQLADWLIDNETGDACLRAGLGKLWRVRDKTGSNGEDARNDIAVLWPVAGGAPWVLTAYLQAGAISYEQRATVLAQVGRIADRLIG.

A signal peptide (tat-type signal) is located at residues 1–35 (MLARRRFLQFSGAAVASSLALPLLARAAGKTAASA). Residue Ser-83 is the Acyl-ester intermediate of the active site. Residue 247–249 (KTG) coordinates substrate.

Belongs to the class-A beta-lactamase family. Predicted to be exported by the Tat system. The position of the signal peptide cleavage has not been experimentally proven.

It carries out the reaction a beta-lactam + H2O = a substituted beta-amino acid. The polypeptide is Beta-lactamase L2 (Stenotrophomonas maltophilia (Pseudomonas maltophilia)).